Reading from the N-terminus, the 350-residue chain is UDP-3-O-acylglucosamine N-acyltransferase (350 aa).

The Proton acceptor role is filled by His257.

Belongs to the transferase hexapeptide repeat family. LpxD subfamily. Homotrimer.

The enzyme catalyses a UDP-3-O-[(3R)-3-hydroxyacyl]-alpha-D-glucosamine + a (3R)-hydroxyacyl-[ACP] = a UDP-2-N,3-O-bis[(3R)-3-hydroxyacyl]-alpha-D-glucosamine + holo-[ACP] + H(+). Its pathway is bacterial outer membrane biogenesis; LPS lipid A biosynthesis. In terms of biological role, catalyzes the N-acylation of UDP-3-O-acylglucosamine using 3-hydroxyacyl-ACP as the acyl donor. Is involved in the biosynthesis of lipid A, a phosphorylated glycolipid that anchors the lipopolysaccharide to the outer membrane of the cell. The protein is UDP-3-O-acylglucosamine N-acyltransferase of Chelativorans sp. (strain BNC1).